The chain runs to 647 residues: Threonine--tRNA ligase (647 aa).

Positions 1–63 (MDKINITFPD…EEDGSIEIVT (63 aa)) constitute a TGS domain. The segment at 242-540 (DHRKIGKELD…LTEETKGAFP (299 aa)) is catalytic. Residues Cys336, His387, and His517 each coordinate Zn(2+).

It belongs to the class-II aminoacyl-tRNA synthetase family. Homodimer. The cofactor is Zn(2+).

The protein localises to the cytoplasm. It catalyses the reaction tRNA(Thr) + L-threonine + ATP = L-threonyl-tRNA(Thr) + AMP + diphosphate + H(+). Its function is as follows. Catalyzes the attachment of threonine to tRNA(Thr) in a two-step reaction: L-threonine is first activated by ATP to form Thr-AMP and then transferred to the acceptor end of tRNA(Thr). Also edits incorrectly charged L-seryl-tRNA(Thr). The protein is Threonine--tRNA ligase of Staphylococcus carnosus (strain TM300).